We begin with the raw amino-acid sequence, 136 residues long: Holo-[acyl-carrier-protein] synthase (136 aa).

Aspartate 8 and glutamate 57 together coordinate Mg(2+).

It belongs to the P-Pant transferase superfamily. AcpS family. Mg(2+) serves as cofactor.

It localises to the cytoplasm. It carries out the reaction apo-[ACP] + CoA = holo-[ACP] + adenosine 3',5'-bisphosphate + H(+). Transfers the 4'-phosphopantetheine moiety from coenzyme A to a Ser of acyl-carrier-protein. This is Holo-[acyl-carrier-protein] synthase from Azorhizobium caulinodans (strain ATCC 43989 / DSM 5975 / JCM 20966 / LMG 6465 / NBRC 14845 / NCIMB 13405 / ORS 571).